A 175-amino-acid polypeptide reads, in one-letter code: uncharacterized protein (175 aa).

Residues 1–10 are compositionally biased toward polar residues; that stretch reads MSKKINNNKT. Positions 1-21 are disordered; the sequence is MSKKINNNKTPRNKVKNNNVS.

This is an uncharacterized protein from Ureaplasma parvum serovar 3 (strain ATCC 700970).